We begin with the raw amino-acid sequence, 429 residues long: Adenylosuccinate synthetase (429 aa).

GTP is bound by residues 12 to 18 and 40 to 42; these read GDEGKGK and GHT. Catalysis depends on aspartate 13, which acts as the Proton acceptor. The Mg(2+) site is built by aspartate 13 and glycine 40. Residues 13-16, 38-41, threonine 128, arginine 142, glutamine 223, threonine 238, and arginine 302 each bind IMP; these read DEGK and NAGH. The Proton donor role is filled by histidine 41. 298–304 contacts substrate; that stretch reads ATTGRKR. GTP contacts are provided by residues arginine 304, 330-332, and 412-414; these read KLD and GTG.

Belongs to the adenylosuccinate synthetase family. In terms of assembly, homodimer. Mg(2+) is required as a cofactor.

It localises to the cytoplasm. The catalysed reaction is IMP + L-aspartate + GTP = N(6)-(1,2-dicarboxyethyl)-AMP + GDP + phosphate + 2 H(+). It participates in purine metabolism; AMP biosynthesis via de novo pathway; AMP from IMP: step 1/2. Its function is as follows. Plays an important role in the de novo pathway of purine nucleotide biosynthesis. Catalyzes the first committed step in the biosynthesis of AMP from IMP. This chain is Adenylosuccinate synthetase, found in Tropheryma whipplei (strain TW08/27) (Whipple's bacillus).